Consider the following 248-residue polypeptide: Ribosomal RNA small subunit methyltransferase G (248 aa).

A disordered region spans residues 1–23 (MFHVKHVGPVEPAAGDPEVPPVA). Residues G93, L98, 143–144 (AE), and R161 each bind S-adenosyl-L-methionine. Residues 226 to 248 (VVSARRAKPPHPKSARTGKAGTR) form a disordered region. Residues 230–248 (RRAKPPHPKSARTGKAGTR) are compositionally biased toward basic residues.

Belongs to the methyltransferase superfamily. RNA methyltransferase RsmG family.

It is found in the cytoplasm. Specifically methylates the N7 position of guanine in position 518 of 16S rRNA. The polypeptide is Ribosomal RNA small subunit methyltransferase G (Mycolicibacterium paratuberculosis (strain ATCC BAA-968 / K-10) (Mycobacterium paratuberculosis)).